A 154-amino-acid chain; its full sequence is MSTSVDLSSYRDQHFKGSRSEQERSLRDSTTLYVGNLSFYTTEEQIHELFSRCGDVRVIVMGLDKYKKTPCGFCFVEYYTRAEAEAAMRFVNGTRLDDRLIRVDWDAGFIEGRQYGRGKTGGQVRDEYRTDYDAGRGGYGKLLSQKIAPNTDNR.

Positions 1–23 are disordered; sequence MSTSVDLSSYRDQHFKGSRSEQE. The segment covering 9 to 23 has biased composition (basic and acidic residues); sequence SYRDQHFKGSRSEQE. Residues tyrosine 10, tyrosine 33, 102-106, 113-117, and 123-124 contribute to the mRNA site; these read RVDWD, RQYGR, and QV. Positions 30 to 108 constitute an RRM domain; sequence TTLYVGNLSF…RLIRVDWDAG (79 aa).

It belongs to the RRM NCBP2 family. As to quaternary structure, component of the nuclear cap-binding complex (CBC), a heterodimer composed of Cbp80 and Cbp20 that interacts with m7GpppG-capped RNA. Interacts with Ars2.

The protein localises to the nucleus. Its function is as follows. Component of the cap-binding complex (CBC), which binds co-transcriptionally to the 5' cap of pre-mRNAs and is involved in various processes such as pre-mRNA splicing and RNA-mediated gene silencing (RNAi). The CBC complex is involved in miRNA-mediated RNA interference via its interaction with Ars2 and is required for primary microRNAs (miRNAs) processing. Also involved in innate immunity via the short interfering RNAs (siRNAs) processing machinery by restricting the viral RNA production. In the CBC complex, Cbp20 recognizes and binds capped RNAs (m7GpppG-capped RNA) but requires Cbp80 to stabilize the movement of its N-terminal loop and lock the CBC into a high affinity cap-binding state with the cap structure. This chain is Nuclear cap-binding protein subunit 2 (Cbp20), found in Drosophila ananassae (Fruit fly).